The primary structure comprises 351 residues: Probable E3 ubiquitin-protein ligase sinah (351 aa).

The disordered stretch occupies residues 1 to 38 (MSVRNSRPQLSWPERVSPQRTIDTPTASGEMLTRRQSA). The span at 18–27 (PQRTIDTPTA) shows a compositional bias: polar residues. An RING-type zinc finger spans residues 106 to 141 (CPVCFGYIMPPIMQCPRGHLICSTCRSKLTICPVCR). Positions 155-346 (VASKLIFPCK…LALNVVIRKV (192 aa)) are SBD. The SIAH-type zinc finger occupies 158–218 (KLIFPCKHSH…VYQHLMSSHE (61 aa)). Zn(2+) is bound by residues C163, C170, H182, C186, C193, C200, H212, and H217.

The protein belongs to the SINA (Seven in absentia) family. Interacts with ebi and phyl.

It catalyses the reaction S-ubiquitinyl-[E2 ubiquitin-conjugating enzyme]-L-cysteine + [acceptor protein]-L-lysine = [E2 ubiquitin-conjugating enzyme]-L-cysteine + N(6)-ubiquitinyl-[acceptor protein]-L-lysine.. Its pathway is protein modification; protein ubiquitination. In terms of biological role, E3 ubiquitin-protein ligase that mediates ubiquitination and subsequent proteasomal degradation of target proteins. The adapter phyl is required to direct the degradation of the two isoforms of the transcriptional repressor Tramtrack (Ttk). E3 ubiquitin ligases accept ubiquitin from an E2 ubiquitin-conjugating enzyme in the form of a thioester and then directly transfers the ubiquitin to targeted substrates. It probably triggers the ubiquitin-mediated degradation of different substrates. A phyl-independent mechanism of degradation exists for isoform beta of ttk that involves motifs in the C-terminus of ttk. The chain is Probable E3 ubiquitin-protein ligase sinah (sinah) from Drosophila melanogaster (Fruit fly).